The chain runs to 140 residues: Transcription antitermination protein NusB (140 aa).

This sequence belongs to the NusB family.

Involved in transcription antitermination. Required for transcription of ribosomal RNA (rRNA) genes. Binds specifically to the boxA antiterminator sequence of the ribosomal RNA (rrn) operons. The protein is Transcription antitermination protein NusB of Elusimicrobium minutum (strain Pei191).